The sequence spans 365 residues: 2-aminoethylphosphonate--pyruvate transaminase (365 aa).

K194 is subject to N6-(pyridoxal phosphate)lysine.

The protein belongs to the class-V pyridoxal-phosphate-dependent aminotransferase family. PhnW subfamily. As to quaternary structure, homodimer. The cofactor is pyridoxal 5'-phosphate.

The enzyme catalyses (2-aminoethyl)phosphonate + pyruvate = phosphonoacetaldehyde + L-alanine. Involved in phosphonate degradation. The sequence is that of 2-aminoethylphosphonate--pyruvate transaminase from Bacillus cereus (strain ATCC 14579 / DSM 31 / CCUG 7414 / JCM 2152 / NBRC 15305 / NCIMB 9373 / NCTC 2599 / NRRL B-3711).